Here is a 153-residue protein sequence, read N- to C-terminus: Endoribonuclease YbeY (153 aa).

Zn(2+)-binding residues include H118, H122, and H128.

Belongs to the endoribonuclease YbeY family. Zn(2+) is required as a cofactor.

It is found in the cytoplasm. Functionally, single strand-specific metallo-endoribonuclease involved in late-stage 70S ribosome quality control and in maturation of the 3' terminus of the 16S rRNA. The protein is Endoribonuclease YbeY of Oenococcus oeni (strain ATCC BAA-331 / PSU-1).